Reading from the N-terminus, the 69-residue chain is Cold shock-like protein CspE (69 aa).

Positions 6 to 66 (GNVKWFNESK…GAKGPSAANV (61 aa)) constitute a CSD domain.

The protein localises to the cytoplasm. In Escherichia coli O6:H1 (strain CFT073 / ATCC 700928 / UPEC), this protein is Cold shock-like protein CspE (cspE).